A 200-amino-acid chain; its full sequence is Glutathione S-transferase 1-1 (200 aa).

The 73-residue stretch at 1-73 (GSSPCRSVIM…YLVEKYGKTD (73 aa)) folds into the GST N-terminal domain. Residues S2, 43-45 (HTI), and 57-59 (ESR) contribute to the glutathione site. The GST C-terminal domain occupies 79–200 (CPKKRAVINQ…AGCLEFKKYF (122 aa)).

This sequence belongs to the GST superfamily. Theta family. Homodimer.

It catalyses the reaction RX + glutathione = an S-substituted glutathione + a halide anion + H(+). It carries out the reaction 1,1,1-trichloro-2,2-bis(4-chlorophenyl)ethane = 1,1-dichloro-2,2-bis(4-chlorophenyl)ethylene + chloride + H(+). In terms of biological role, conjugation of reduced glutathione to a wide number of exogenous and endogenous hydrophobic electrophiles. Has DDT dehydrochlorinase activity. This is Glutathione S-transferase 1-1 (GstD1) from Drosophila teissieri (Fruit fly).